Consider the following 94-residue polypeptide: C-X-C motif chemokine 11 (94 aa).

A signal peptide spans 1 to 21 (MSVKGMAIALAVILCATVVQG). Residue Arg27 is modified to Citrulline; by PAD2. Disulfide bonds link Cys30/Cys57 and Cys32/Cys74.

In terms of assembly, interacts with TNFAIP6 (via Link domain). As to expression, high levels in peripheral blood leukocytes, pancreas and liver astrocytes. Moderate levels in thymus, spleen and lung. Low levels in placenta, prostate and small intestine. Also found in epidermal basal layer keratinocytes in skin disorders.

Its subcellular location is the secreted. In terms of biological role, chemotactic for interleukin-activated T-cells but not unstimulated T-cells, neutrophils or monocytes. Induces calcium release in activated T-cells. Binds to CXCR3. May play an important role in CNS diseases which involve T-cell recruitment. May play a role in skin immune responses. In Homo sapiens (Human), this protein is C-X-C motif chemokine 11 (CXCL11).